Consider the following 1042-residue polypeptide: Probable inorganic carbon transporter subunit DabA (1042 aa).

4 residues coordinate Zn(2+): C462, D464, H721, and C736.

The protein belongs to the inorganic carbon transporter (TC 9.A.2) DabA family. As to quaternary structure, forms a complex with DabB. It depends on Zn(2+) as a cofactor.

It is found in the cell inner membrane. Part of an energy-coupled inorganic carbon pump. In Nitrosomonas eutropha (strain DSM 101675 / C91 / Nm57), this protein is Probable inorganic carbon transporter subunit DabA.